A 400-amino-acid chain; its full sequence is Exodeoxyribonuclease 7 large subunit (400 aa).

This sequence belongs to the XseA family. As to quaternary structure, heterooligomer composed of large and small subunits.

It localises to the cytoplasm. It carries out the reaction Exonucleolytic cleavage in either 5'- to 3'- or 3'- to 5'-direction to yield nucleoside 5'-phosphates.. In terms of biological role, bidirectionally degrades single-stranded DNA into large acid-insoluble oligonucleotides, which are then degraded further into small acid-soluble oligonucleotides. This chain is Exodeoxyribonuclease 7 large subunit, found in Clostridium perfringens (strain 13 / Type A).